The chain runs to 369 residues: Mannose-1-phosphate guanylyltransferase catalytic subunit beta (369 aa).

Positions 12-231 (RALILVGGYG…TGFWMDIGQP (220 aa)) are substrate-binding domain. Residue Asp-120 coordinates GDP-alpha-D-mannose. Mg(2+) is bound at residue Asp-120. Residue Lys-171 is part of the active site. Asp-227 is a binding site for GDP-alpha-D-mannose. Position 227 (Asp-227) interacts with Mg(2+). The interval 254–369 (YTGPGVVGNV…ASVPEPQIIM (116 aa)) is hexapeptide repeat domain.

The protein belongs to the transferase hexapeptide repeat family. Component of the GMPPA-GMPPB mannose-1-phosphate guanylyltransferase complex composed of 4 Gmppa subunits and 8 Gmppb subunits; the complex is organized into three layers, a central layer made up of 2 Gmppa dimers sandwiched between two layers each made up of 2 Gmppb dimers. Gmppb catalytic activity is reduced when part of the complex and binding of GDP-alpha-D-Mannose by Gmppa induces allosteric feedback inhibition of Gmppb. It depends on Mg(2+) as a cofactor.

It carries out the reaction alpha-D-mannose 1-phosphate + GTP + H(+) = GDP-alpha-D-mannose + diphosphate. The protein operates within nucleotide-sugar biosynthesis; GDP-alpha-D-mannose biosynthesis; GDP-alpha-D-mannose from alpha-D-mannose 1-phosphate (GTP route): step 1/1. Its activity is regulated as follows. Enzyme activity is reduced by incorporation into the GMPPA-GMPPB mannose-1-phosphate guanylyltransferase complex. Allosterically inhibited, when part of the GMPPA-GMPPB complex, by GDP-alpha-D-mannose binding to Gmppa. Catalytic subunit of the GMPPA-GMPPB mannose-1-phosphate guanylyltransferase complex. Catalyzes the formation of GDP-mannose, an essential precursor of glycan moieties of glycoproteins and glycolipids. Can catalyze the reverse reaction in vitro. Together with GMPPA regulates GDP-alpha-D-mannose levels. The sequence is that of Mannose-1-phosphate guanylyltransferase catalytic subunit beta from Drosophila melanogaster (Fruit fly).